Here is a 547-residue protein sequence, read N- to C-terminus: Glucose-6-phosphate isomerase (547 aa).

Glu354 acts as the Proton donor in catalysis. Active-site residues include His385 and Lys513.

Belongs to the GPI family.

It localises to the cytoplasm. It catalyses the reaction alpha-D-glucose 6-phosphate = beta-D-fructose 6-phosphate. It functions in the pathway carbohydrate biosynthesis; gluconeogenesis. Its pathway is carbohydrate degradation; glycolysis; D-glyceraldehyde 3-phosphate and glycerone phosphate from D-glucose: step 2/4. Its function is as follows. Catalyzes the reversible isomerization of glucose-6-phosphate to fructose-6-phosphate. In Endomicrobium trichonymphae, this protein is Glucose-6-phosphate isomerase.